Consider the following 408-residue polypeptide: uncharacterized protein (408 aa).

This sequence belongs to the protein kinase superfamily. ADCK protein kinase family.

This is an uncharacterized protein from Synechocystis sp. (strain ATCC 27184 / PCC 6803 / Kazusa).